The chain runs to 442 residues: CBL-interacting serine/threonine-protein kinase 14 (442 aa).

The 255-residue stretch at 22 to 276 folds into the Protein kinase domain; the sequence is YEVGKLVGCG…IEEIIHDPWF (255 aa). Residues 28–36 and K51 contribute to the ATP site; that span reads VGCGAFAKV. D144 serves as the catalytic Proton acceptor. The segment at 162–191 is activation loop; it reads DFGLSALTDQIRPDGLLHTLCGTPAYVAPE. S166 is modified (phosphoserine). At T180 the chain carries Phosphothreonine. The 25-residue stretch at 305 to 329 folds into the NAF domain; that stretch reads MGARRMNAFDIISGSPGFNLSGLFG. Residues 335–365 are PPI; sequence DRVERFVSAWTAERVVERLEEIVSAENLTVA.

It belongs to the protein kinase superfamily. CAMK Ser/Thr protein kinase family. SNF1 subfamily. In terms of assembly, interacts with CBL2. Interacts with CBL3. Interacts with CBL8. Interacts with CBL9. Interacts with KIN10 and KIN11. It depends on Mn(2+) as a cofactor. In terms of tissue distribution, predominant in roots, cauline leaves, and flowers. Ubiquitous with highest expression in 7-day-old seedlings and flower buds, followed by that in cauline leaves and young siliques.

It localises to the cytoplasm. It is found in the nucleus. It catalyses the reaction L-seryl-[protein] + ATP = O-phospho-L-seryl-[protein] + ADP + H(+). It carries out the reaction L-threonyl-[protein] + ATP = O-phospho-L-threonyl-[protein] + ADP + H(+). In terms of biological role, CIPK serine-threonine protein kinases interact with CBL proteins. Binding of a CBL protein to the regulatory NAF domain of CIPK protein lead to the activation of the kinase in a calcium-dependent manner. The sequence is that of CBL-interacting serine/threonine-protein kinase 14 (CIPK14) from Arabidopsis thaliana (Mouse-ear cress).